The following is a 339-amino-acid chain: Ferrochelatase (339 aa).

His-202 and Glu-283 together coordinate Fe cation.

Belongs to the ferrochelatase family.

The protein resides in the cytoplasm. The catalysed reaction is heme b + 2 H(+) = protoporphyrin IX + Fe(2+). The protein operates within porphyrin-containing compound metabolism; protoheme biosynthesis; protoheme from protoporphyrin-IX: step 1/1. In terms of biological role, catalyzes the ferrous insertion into protoporphyrin IX. The protein is Ferrochelatase of Psychrobacter sp. (strain PRwf-1).